The primary structure comprises 631 residues: Mini-chromosome maintenance complex-binding protein (631 aa).

Polar residues-rich tracts occupy residues 148-157 (ARVVPSTSYV) and 173-192 (TQCQ…SESH). The disordered stretch occupies residues 148 to 218 (ARVVPSTSYV…SSSSHCTSSL (71 aa)). Positions 193–202 (GNTEPKRQET) are enriched in basic and acidic residues. Residues 206-217 (SQDSSSSHCTSS) are compositionally biased toward low complexity.

Belongs to the MCMBP family. In terms of assembly, interacts with the mcm complex: associates with the mcm3-7 complex which lacks mcm2, while it does not interact with the mcm complex when mcm2 is present (mcm2-7 complex).

Its subcellular location is the nucleus. Its function is as follows. Associated component of the mcm complex that acts as a regulator of DNA replication. Binds to the MCM complex during late S phase and promotes the disassembly of the mcm complex from chromatin, thereby acting as a key regulator of pre-replication complex (pre-RC) unloading from replicated DNA. Can dissociate the mcm complex without addition of ATP; probably acts by destabilizing interactions of each individual subunits of the mcm complex. Required for sister chromatid cohesion. The sequence is that of Mini-chromosome maintenance complex-binding protein (mcmbp) from Danio rerio (Zebrafish).